Here is a 303-residue protein sequence, read N- to C-terminus: Sulfotransferase 6B1 (303 aa).

65–70 provides a ligand contact to 3'-phosphoadenylyl sulfate; sequence KCGSNW. His-118 serves as the catalytic Proton acceptor. Residues Arg-140, Ser-148, Tyr-203, 237–242, and 259–261 contribute to the 3'-phosphoadenylyl sulfate site; these read STFLAM and RKG.

The protein belongs to the sulfotransferase 1 family. As to expression, expressed in brain, heart, kidney, thymus, lung, liver and testis.

It is found in the cytoplasm. The protein resides in the cytosol. The catalysed reaction is thyroxine + 3'-phosphoadenylyl sulfate = thyroxine sulfate + adenosine 3',5'-bisphosphate + H(+). In terms of biological role, sulfotransferase that utilizes 3'-phospho-5'-adenylyl sulfate (PAPS) as sulfonate donor to catalyze the sulfate conjugation of thyroxine. Involved in the metabolism of thyroxine. The polypeptide is Sulfotransferase 6B1 (Sult6b1) (Mus musculus (Mouse)).